We begin with the raw amino-acid sequence, 596 residues long: Elongation factor 4 (596 aa).

Positions 2 to 184 (KHIRNFSIIA…VIVEQIPPPE (183 aa)) constitute a tr-type G domain. Residues 14-19 (DHGKST) and 131-134 (NKID) each bind GTP.

Belongs to the TRAFAC class translation factor GTPase superfamily. Classic translation factor GTPase family. LepA subfamily.

The protein resides in the cell inner membrane. The catalysed reaction is GTP + H2O = GDP + phosphate + H(+). Functionally, required for accurate and efficient protein synthesis under certain stress conditions. May act as a fidelity factor of the translation reaction, by catalyzing a one-codon backward translocation of tRNAs on improperly translocated ribosomes. Back-translocation proceeds from a post-translocation (POST) complex to a pre-translocation (PRE) complex, thus giving elongation factor G a second chance to translocate the tRNAs correctly. Binds to ribosomes in a GTP-dependent manner. The protein is Elongation factor 4 of Shewanella oneidensis (strain ATCC 700550 / JCM 31522 / CIP 106686 / LMG 19005 / NCIMB 14063 / MR-1).